The chain runs to 630 residues: Neuronal acetylcholine receptor subunit alpha-4 (630 aa).

The N-terminal stretch at 1 to 30 is a signal peptide; sequence MANSGTGAPPPLLLLPLLLLLGTGLLPASS. Over 32 to 249 the chain is Extracellular; that stretch reads IETRAHAEER…IIRRLPLFYT (218 aa). A glycan (N-linked (GlcNAc...) asparagine) is linked at Asn-59. 2 residues coordinate Ca(2+): Val-78 and Glu-80. N-linked (GlcNAc...) asparagine glycans are attached at residues Asn-109 and Asn-176. Intrachain disulfides connect Cys-163–Cys-177 and Cys-227–Cys-228. Residues 250–270 traverse the membrane as a helical segment; it reads INLIIPCLLISCLTVLVFYLP. Cys-273 is lipidated: S-palmitoyl cysteine. The next 2 membrane-spanning stretches (helical) occupy residues 279-299 and 313-333; these read LCISVLLSLTVFLLLITEIIP and LLFTMIFVTLSIVITVFVLNV. At 334–604 the chain is on the cytoplasmic side; it reads HHRSPRTHTM…WKYVAMVIDR (271 aa). Disordered stretches follow at residues 418 to 463 and 505 to 526; these read TAVE…SGAP and SLADSKPTSSPTSLKARPSQLP. Ser-428 is modified (phosphoserine). A compositionally biased stretch (basic and acidic residues) spans 434 to 443; sequence PDLKTSEVEK. Residues 447–457 are compositionally biased toward pro residues; sequence CPSPGSCPPPK. Residues Ser-542 and Ser-545 each carry the phosphoserine modification. Residues 605 to 625 form a helical membrane-spanning segment; the sequence is IFLWMFIIVCLLGTVGLFLPP.

It belongs to the ligand-gated ion channel (TC 1.A.9) family. Acetylcholine receptor (TC 1.A.9.1) subfamily. Alpha-4/CHRNA4 sub-subfamily. Neuronal AChR is composed of two different types of subunits: alpha and beta. CHRNA4 forms heteropentameric neuronal acetylcholine receptors with CHRNB2 and CHRNB4, as well as CHRNA5 and CHRNB3 as accesory subunits. Found in two major stoichiometric forms, LS (low agonist sensitivity): (CHRNA4)3:(CHRNB2)2 and HS (high agonist sensitivity): (CHRNA4)2:(CHRNB2)3, the two stoichiometric forms differ in their unitary conductance, calcium permeability, ACh sensitivity and potentiation by divalent cation. Cells produce predominantly an (CHRNA4)3:(CHRNB2)2 nAChR. The (CHRNA4)2:(CHRNB2)3 expression is selectively up-regulated by nicotine and has lower single channel conductance and calcium permeability. In the striatum, also forms CHRNA4:CHRNA6:CHRNB2 complexes. Also found in the stoichiometric form: (CHRNA4:CHRNB2)2:CHRNB3. Interacts with RIC3; which is required for proper folding and assembly. Interacts with LYPD6. In terms of tissue distribution, in various regions of the central nervous system. Expressed in hippocampal neurons.

It localises to the presynaptic cell membrane. The protein resides in the cell membrane. It catalyses the reaction Ca(2+)(in) = Ca(2+)(out). The catalysed reaction is K(+)(in) = K(+)(out). The enzyme catalyses Na(+)(in) = Na(+)(out). Its activity is regulated as follows. Activated by a myriad of ligands such as acetylcholine, cytisine, nicotine, choline and epibatidine. Channel potentiation by calcium is stoichiometry-selective, CHRNA4:CHRNB2 nACh receptor is achieved by calcium association with topographically distinct sites framed by anionic residues within the CHRNA4 subunit and between the CHRNA4 and CHRNB2 subunits. nAChR activity is inhibited by the antagonist alpha-conotoxins BuIA, PnIA, GID and MII, small disulfide-constrained peptides from cone snails. Component of neuronal acetylcholine receptors (nAChRs) that function as pentameric, ligand-gated cation channels with high calcium permeability among other activities. nAChRs are excitatory neurotrasnmitter receptors formed by a collection of nAChR subunits known to mediate synaptic transmission in the nervous system and the neuromuscular junction. Each nAchR subunit confers differential attributes to channel properties, including activation, deactivation and desensitization kinetics, pH sensitivity, cation permeability, and binding to allosteric modulators. CHRNA4 forms heteropentameric neuronal acetylcholine receptors with CHRNB2 and CHRNB4, as well as CHRNA5 and CHRNB3 as accesory subunits. Is the most abundant nAChR subtype expressed in the central nervous system. Found in two major stoichiometric forms,(CHRNA4)3:(CHRNB2)2 and (CHRNA4)2:(CHRNB2)3, the two stoichiometric forms differ in their unitary conductance, calcium permeability, ACh sensitivity and potentiation by divalent cation. Involved in the modulation of calcium-dependent signaling pathways, influences the release of neurotransmitters, including dopamine, glutamate and GABA. This Rattus norvegicus (Rat) protein is Neuronal acetylcholine receptor subunit alpha-4 (Chrna4).